A 195-amino-acid polypeptide reads, in one-letter code: Xanthine phosphoribosyltransferase (195 aa).

Positions 20 and 27 each coordinate xanthine. 128–132 (ANGQA) lines the 5-phospho-alpha-D-ribose 1-diphosphate pocket. Lysine 156 serves as a coordination point for xanthine.

This sequence belongs to the purine/pyrimidine phosphoribosyltransferase family. Xpt subfamily. As to quaternary structure, homodimer.

The protein resides in the cytoplasm. The catalysed reaction is XMP + diphosphate = xanthine + 5-phospho-alpha-D-ribose 1-diphosphate. It participates in purine metabolism; XMP biosynthesis via salvage pathway; XMP from xanthine: step 1/1. Functionally, converts the preformed base xanthine, a product of nucleic acid breakdown, to xanthosine 5'-monophosphate (XMP), so it can be reused for RNA or DNA synthesis. The chain is Xanthine phosphoribosyltransferase from Limosilactobacillus fermentum (strain NBRC 3956 / LMG 18251) (Lactobacillus fermentum).